A 396-amino-acid chain; its full sequence is S-adenosylmethionine synthase 3 (396 aa).

E12 is a Mg(2+) binding site. H18 is an ATP binding site. E46 contacts K(+). Residues E59 and Q102 each coordinate L-methionine. Residues 170-172, 238-241, D249, 255-256, A272, K276, and K280 contribute to the ATP site; these read DGK, SGRF, and RK. D249 is a binding site for L-methionine. K280 contributes to the L-methionine binding site.

This sequence belongs to the AdoMet synthase family. As to quaternary structure, homotetramer. The cofactor is Mn(2+). Requires Mg(2+) as cofactor. Co(2+) is required as a cofactor. K(+) serves as cofactor.

It is found in the cytoplasm. The enzyme catalyses L-methionine + ATP + H2O = S-adenosyl-L-methionine + phosphate + diphosphate. It functions in the pathway amino-acid biosynthesis; S-adenosyl-L-methionine biosynthesis; S-adenosyl-L-methionine from L-methionine: step 1/1. Its function is as follows. Catalyzes the formation of S-adenosylmethionine from methionine and ATP. The reaction comprises two steps that are both catalyzed by the same enzyme: formation of S-adenosylmethionine (AdoMet) and triphosphate, and subsequent hydrolysis of the triphosphate. This Oryza sativa subsp. japonica (Rice) protein is S-adenosylmethionine synthase 3 (METK3).